The sequence spans 395 residues: Altered inheritance of mitochondria protein 39, mitochondrial (395 aa).

The chain crosses the membrane as a helical span at residues 156–176 (QIWSAIFGGIFGVILGYSLIY).

The protein belongs to the AIM39 family.

The protein localises to the mitochondrion membrane. This is Altered inheritance of mitochondria protein 39, mitochondrial (AIM39) from Saccharomyces cerevisiae (strain JAY291) (Baker's yeast).